The primary structure comprises 247 residues: DNA polymerase sliding clamp (247 aa).

It belongs to the PCNA family. Homotrimer. The subunits circularize to form a toroid; DNA passes through its center. Replication factor C (RFC) is required to load the toroid on the DNA.

Its function is as follows. Sliding clamp subunit that acts as a moving platform for DNA processing. Responsible for tethering the catalytic subunit of DNA polymerase and other proteins to DNA during high-speed replication. The protein is DNA polymerase sliding clamp of Methanocorpusculum labreanum (strain ATCC 43576 / DSM 4855 / Z).